The chain runs to 396 residues: ATP-dependent RNA helicase eIF4A (396 aa).

The Q motif motif lies at 22–50; that stretch reads YSFDDLKLKEELLRGIFGYGFVEPSAIQQ. A Helicase ATP-binding domain is found at 53–223; that stretch reads ILPIIEGKDV…SKFMKDPVRI (171 aa). 66 to 73 is an ATP binding site; sequence AQSGTGKT. A DEAD box motif is present at residues 171–174; the sequence is DEAD. The 162-residue stretch at 234 to 395 folds into the Helicase C-terminal domain; that stretch reads GIGQYYVNVE…ELPSSISELF (162 aa).

The protein belongs to the DEAD box helicase family. eIF4A subfamily. Component of the eIF4F complex, which composition varies with external and internal environmental conditions. It is composed of at least eIF4A, eIF4E and eIF4G.

The protein localises to the cytoplasm. It catalyses the reaction ATP + H2O = ADP + phosphate + H(+). Its function is as follows. ATP-dependent RNA helicase which is a subunit of the eIF4F complex involved in cap recognition and is required for mRNA binding to ribosome. In the current model of translation initiation, eIF4A unwinds RNA secondary structures in the 5'-UTR of mRNAs which is necessary to allow efficient binding of the small ribosomal subunit, and subsequent scanning for the initiator codon. The polypeptide is ATP-dependent RNA helicase eIF4A (TIF1) (Kluyveromyces lactis (strain ATCC 8585 / CBS 2359 / DSM 70799 / NBRC 1267 / NRRL Y-1140 / WM37) (Yeast)).